Consider the following 121-residue polypeptide: Large ribosomal subunit protein bL12 (121 aa).

This sequence belongs to the bacterial ribosomal protein bL12 family. In terms of assembly, homodimer. Part of the ribosomal stalk of the 50S ribosomal subunit. Forms a multimeric L10(L12)X complex, where L10 forms an elongated spine to which 2 to 4 L12 dimers bind in a sequential fashion. Binds GTP-bound translation factors.

Functionally, forms part of the ribosomal stalk which helps the ribosome interact with GTP-bound translation factors. Is thus essential for accurate translation. The polypeptide is Large ribosomal subunit protein bL12 (Pseudomonas fluorescens (strain SBW25)).